A 182-amino-acid chain; its full sequence is Adenine phosphoribosyltransferase (182 aa).

This sequence belongs to the purine/pyrimidine phosphoribosyltransferase family. As to quaternary structure, homodimer.

It is found in the cytoplasm. The catalysed reaction is AMP + diphosphate = 5-phospho-alpha-D-ribose 1-diphosphate + adenine. Its pathway is purine metabolism; AMP biosynthesis via salvage pathway; AMP from adenine: step 1/1. Functionally, catalyzes a salvage reaction resulting in the formation of AMP, that is energically less costly than de novo synthesis. The polypeptide is Adenine phosphoribosyltransferase (Stutzerimonas stutzeri (strain A1501) (Pseudomonas stutzeri)).